Here is a 555-residue protein sequence, read N- to C-terminus: DNA ligase (555 aa).

Glutamate 247 contributes to the ATP binding site. Residue lysine 249 is the N6-AMP-lysine intermediate of the active site. 6 residues coordinate ATP: arginine 254, arginine 269, glutamate 298, phenylalanine 337, arginine 411, and lysine 417.

Belongs to the ATP-dependent DNA ligase family. It depends on Mg(2+) as a cofactor.

The enzyme catalyses ATP + (deoxyribonucleotide)n-3'-hydroxyl + 5'-phospho-(deoxyribonucleotide)m = (deoxyribonucleotide)n+m + AMP + diphosphate.. DNA ligase that seals nicks in double-stranded DNA during DNA replication, DNA recombination and DNA repair. In Archaeoglobus fulgidus (strain ATCC 49558 / DSM 4304 / JCM 9628 / NBRC 100126 / VC-16), this protein is DNA ligase.